Consider the following 616-residue polypeptide: Coagulation factor XII (616 aa).

A signal peptide spans 1 to 19 (MRALLLLGILLVSLESALL). Residues 42–90 (VTGEPCHFPFQYYRQLYYKCIQRGQRGPRPWCATTPNFEKDQRWAYCLE) enclose the Fibronectin type-II domain. 13 disulfide bridges follow: cysteine 47–cysteine 73, cysteine 61–cysteine 88, cysteine 98–cysteine 110, cysteine 104–cysteine 119, cysteine 121–cysteine 130, cysteine 135–cysteine 163, cysteine 161–cysteine 170, cysteine 178–cysteine 189, cysteine 183–cysteine 198, cysteine 200–cysteine 209, cysteine 217–cysteine 295, cysteine 238–cysteine 277, and cysteine 266–cysteine 290. The region spanning 94–131 (VKDHCNKGNPCQKGGTCVNMPNGPHCICPDHFTGKHCQ) is the EGF-like 1 domain. The O-linked (Fuc) threonine glycan is linked to threonine 109. Residues 133–173 (EKCFEPQFLQFFQENEIWHRFEPAGVSKCQCKGPKAQCKPV) enclose the Fibronectin type-I domain. The region spanning 174–210 (ASQVCSTNPCLNGGSCLQTEGHRLCRCPTGYAGRLCD) is the EGF-like 2 domain. Positions 216–295 (RCYSDRGLSY…SWQYCRLARC (80 aa)) constitute a Kringle domain. Asparagine 249, asparagine 271, and asparagine 335 each carry an N-linked (GlcNAc...) asparagine glycan. The disordered stretch occupies residues 303-342 (PPILTPTQSPSEHQDSPLLSREPQPTTQTPSQNLTSAWCA). Residues 325–338 (PQPTTQTPSQNLTS) show a composition bias toward polar residues. 7 disulfides stabilise this stretch: cysteine 358–cysteine 485, cysteine 396–cysteine 412, cysteine 404–cysteine 474, cysteine 435–cysteine 438, cysteine 501–cysteine 570, cysteine 533–cysteine 549, and cysteine 560–cysteine 591. The Peptidase S1 domain occupies 372 to 615 (IVGGLVALPG…YLAWIQEHTT (244 aa)). Histidine 411 serves as the catalytic Charge relay system. Asparagine 432 is a glycosylation site (N-linked (GlcNAc...) asparagine). Aspartate 460 (charge relay system) is an active-site residue. Residue serine 564 is the Charge relay system of the active site.

The protein belongs to the peptidase S1 family. As to quaternary structure, interacts with HRG; the interaction, which is enhanced in the presence of zinc ions and inhibited by heparin-binding, inhibits factor XII autoactivation and contact-initiated coagulation. O- and N-glycosylated.

The protein resides in the secreted. It carries out the reaction Selective cleavage of Arg-|-Ile bonds in factor VII to form factor VIIa and factor XI to form factor XIa.. With respect to regulation, activity is promoted in the presence of negatively charged surfaces. Functionally, factor XII is a serum glycoprotein that participates in the initiation of blood coagulation, fibrinolysis, and the generation of bradykinin and angiotensin. Prekallikrein is cleaved by factor XII to form kallikrein, which then cleaves factor XII first to alpha-factor XIIa and then trypsin cleaves it to beta-factor XIIa. Alpha-factor XIIa activates factor XI to factor XIa. This Sus scrofa (Pig) protein is Coagulation factor XII (F12).